The sequence spans 198 residues: Transcriptional regulator GfcR (198 aa).

It belongs to the purine/pyrimidine phosphoribosyltransferase family. GfcR subfamily.

This is Transcriptional regulator GfcR from Methanosphaera stadtmanae (strain ATCC 43021 / DSM 3091 / JCM 11832 / MCB-3).